Consider the following 403-residue polypeptide: uncharacterized protein (403 aa).

Residues 55–88 (LTGSPNPQATPKQENKSNFFSEKQSVRENGNSSA) are compositionally biased toward polar residues. A disordered region spans residues 55–95 (LTGSPNPQATPKQENKSNFFSEKQSVRENGNSSAGEKKQKW). Serine 58 bears the Phosphoserine mark. In terms of domain architecture, J spans 113 to 177 (QYYEILDLKK…NLRAHYDRTG (65 aa)). A helical transmembrane segment spans residues 263 to 283 (SIFYQLLPLIVVILFAFLSNF).

It localises to the endoplasmic reticulum membrane. This is an uncharacterized protein from Schizosaccharomyces pombe (strain 972 / ATCC 24843) (Fission yeast).